Reading from the N-terminus, the 216-residue chain is Refilin-A (216 aa).

The interval Met1 to Arg83 is disordered. Residues Asp12–Leu22 are compositionally biased toward basic and acidic residues. Over residues Gly29–Pro39 the composition is skewed to pro residues. Residues Ala57 to Pro71 show a composition bias toward low complexity. Arg163 is modified (asymmetric dimethylarginine).

The protein belongs to the Refilin family. As to quaternary structure, interacts with FLNA and FLNB.

It is found in the cytoplasm. It localises to the cytoskeleton. In terms of biological role, involved in the regulation of the perinuclear actin network and nuclear shape through interaction with filamins. Plays an essential role in actin cytoskeleton formation in developing cartilaginous cells. This is Refilin-A from Homo sapiens (Human).